The following is a 223-amino-acid chain: Thiamine-phosphate synthase (223 aa).

4-amino-2-methyl-5-(diphosphooxymethyl)pyrimidine is bound by residues 37–41 and aspartate 72; that span reads QFREK. Mg(2+) contacts are provided by aspartate 73 and aspartate 92. Position 110 (serine 110) interacts with 4-amino-2-methyl-5-(diphosphooxymethyl)pyrimidine. 2-[(2R,5Z)-2-carboxy-4-methylthiazol-5(2H)-ylidene]ethyl phosphate is bound at residue 136-138; the sequence is TQS. Lysine 139 contacts 4-amino-2-methyl-5-(diphosphooxymethyl)pyrimidine. 2-[(2R,5Z)-2-carboxy-4-methylthiazol-5(2H)-ylidene]ethyl phosphate is bound by residues glycine 168 and 188–189; that span reads IS.

This sequence belongs to the thiamine-phosphate synthase family. Mg(2+) serves as cofactor.

It carries out the reaction 2-[(2R,5Z)-2-carboxy-4-methylthiazol-5(2H)-ylidene]ethyl phosphate + 4-amino-2-methyl-5-(diphosphooxymethyl)pyrimidine + 2 H(+) = thiamine phosphate + CO2 + diphosphate. The catalysed reaction is 2-(2-carboxy-4-methylthiazol-5-yl)ethyl phosphate + 4-amino-2-methyl-5-(diphosphooxymethyl)pyrimidine + 2 H(+) = thiamine phosphate + CO2 + diphosphate. It catalyses the reaction 4-methyl-5-(2-phosphooxyethyl)-thiazole + 4-amino-2-methyl-5-(diphosphooxymethyl)pyrimidine + H(+) = thiamine phosphate + diphosphate. Its pathway is cofactor biosynthesis; thiamine diphosphate biosynthesis; thiamine phosphate from 4-amino-2-methyl-5-diphosphomethylpyrimidine and 4-methyl-5-(2-phosphoethyl)-thiazole: step 1/1. Its function is as follows. Condenses 4-methyl-5-(beta-hydroxyethyl)thiazole monophosphate (THZ-P) and 2-methyl-4-amino-5-hydroxymethyl pyrimidine pyrophosphate (HMP-PP) to form thiamine monophosphate (TMP). The protein is Thiamine-phosphate synthase of Streptococcus agalactiae serotype Ia (strain ATCC 27591 / A909 / CDC SS700).